We begin with the raw amino-acid sequence, 254 residues long: 4-hydroxy-tetrahydrodipicolinate reductase (254 aa).

7-12 (GASGRI) contributes to the NAD(+) binding site. Arg35 lines the NADP(+) pocket. Residues 91 to 93 (GTT) and 115 to 118 (AHNM) each bind NAD(+). Residue His147 is the Proton donor/acceptor of the active site. A (S)-2,3,4,5-tetrahydrodipicolinate-binding site is contributed by His148. The active-site Proton donor is Lys151. 157 to 158 (GT) is a binding site for (S)-2,3,4,5-tetrahydrodipicolinate.

It belongs to the DapB family.

It localises to the cytoplasm. The catalysed reaction is (S)-2,3,4,5-tetrahydrodipicolinate + NAD(+) + H2O = (2S,4S)-4-hydroxy-2,3,4,5-tetrahydrodipicolinate + NADH + H(+). It catalyses the reaction (S)-2,3,4,5-tetrahydrodipicolinate + NADP(+) + H2O = (2S,4S)-4-hydroxy-2,3,4,5-tetrahydrodipicolinate + NADPH + H(+). It functions in the pathway amino-acid biosynthesis; L-lysine biosynthesis via DAP pathway; (S)-tetrahydrodipicolinate from L-aspartate: step 4/4. In terms of biological role, catalyzes the conversion of 4-hydroxy-tetrahydrodipicolinate (HTPA) to tetrahydrodipicolinate. The protein is 4-hydroxy-tetrahydrodipicolinate reductase of Helicobacter pylori (strain ATCC 700392 / 26695) (Campylobacter pylori).